A 710-amino-acid polypeptide reads, in one-letter code: Polyribonucleotide nucleotidyltransferase (710 aa).

Mg(2+) contacts are provided by aspartate 487 and aspartate 493. The KH domain maps to 554 to 613 (PRIHTMKISAEKIKDVIGKGGAVIRALTEETGTTIEIEDDGTIKIAATEGAAAKEAIRRI). The S1 motif domain occupies 623–691 (GRIYTGKVAR…RQGRVRLSMK (69 aa)). Residues 691–710 (KEAVEKPAEEANDASEAKGE) form a disordered region.

The protein belongs to the polyribonucleotide nucleotidyltransferase family. In terms of assembly, component of the RNA degradosome, which is a multiprotein complex involved in RNA processing and mRNA degradation. Mg(2+) is required as a cofactor.

Its subcellular location is the cytoplasm. The enzyme catalyses RNA(n+1) + phosphate = RNA(n) + a ribonucleoside 5'-diphosphate. Functionally, involved in mRNA degradation. Catalyzes the phosphorolysis of single-stranded polyribonucleotides processively in the 3'- to 5'-direction. This chain is Polyribonucleotide nucleotidyltransferase, found in Vibrio campbellii (strain ATCC BAA-1116).